Consider the following 161-residue polypeptide: Arachidonate 5-lipoxygenase-activating protein (161 aa).

The Lumenal segment spans residues 1 to 8 (MDQEAVGN). A helical transmembrane segment spans residues 9–30 (IVLLAIVTLISVVQNGFFAHKV). The Cytoplasmic segment spans residues 31-52 (EHESKTHNGRSFQRTGTLAFER). The helical transmembrane segment at 53 to 77 (VYTANQNCVDAYPTFLVMLWSAGLL) threads the bilayer. Residues 78 to 80 (CSQ) are Lumenal-facing. Residues 81 to 102 (VPAAFAGLMYLFVRQKYFVGYL) form a helical membrane-spanning segment. Over 103-107 (GERTQ) the chain is Cytoplasmic. Residues 108-115 (STPGYIFG) lie within the membrane without spanning it. Residues 116-128 (KRIILFLFAMSLA) traverse the membrane as a helical segment. Topologically, residues 129–161 (GILNYFFIALFGSDFENYIKTVTTTISPLLLIP) are lumenal.

Belongs to the MAPEG family. In terms of assembly, homotrimer. Interacts with LTC4S and ALOX5.

Its subcellular location is the nucleus membrane. It localises to the endoplasmic reticulum membrane. Functionally, required for leukotriene biosynthesis by ALOX5 (5-lipoxygenase). Anchors ALOX5 to the membrane. Binds arachidonic acid, and could play an essential role in the transfer of arachidonic acid to ALOX5. Binds to MK-886, a compound that blocks the biosynthesis of leukotrienes. The sequence is that of Arachidonate 5-lipoxygenase-activating protein (ALOX5AP) from Bos taurus (Bovine).